The chain runs to 285 residues: 2,3,4,5-tetrahydropyridine-2,6-dicarboxylate N-succinyltransferase (285 aa).

Residues Arg-111 and Asp-148 each contribute to the substrate site.

The protein belongs to the transferase hexapeptide repeat family. In terms of assembly, homotrimer.

The protein localises to the cytoplasm. It carries out the reaction (S)-2,3,4,5-tetrahydrodipicolinate + succinyl-CoA + H2O = (S)-2-succinylamino-6-oxoheptanedioate + CoA. It participates in amino-acid biosynthesis; L-lysine biosynthesis via DAP pathway; LL-2,6-diaminopimelate from (S)-tetrahydrodipicolinate (succinylase route): step 1/3. The sequence is that of 2,3,4,5-tetrahydropyridine-2,6-dicarboxylate N-succinyltransferase from Sinorhizobium fredii (strain NBRC 101917 / NGR234).